The sequence spans 469 residues: Neuraminidase (469 aa).

Residues 1–9 (MNPNQKIIT) lie on the Intravirion side of the membrane. Residues 10–30 (IGSVSLTIATICFLMQIAILV) form a helical membrane-spanning segment. The tract at residues 11 to 33 (GSVSLTIATICFLMQIAILVTTV) is involved in apical transport and lipid raft association. Residues 31-469 (TTVTLHFKQY…DGADINLMPI (439 aa)) lie on the Virion surface side of the membrane. The tract at residues 36 to 88 (HFKQYECSSPPNNQVMPCEPIIIERNITEIVYLTNTTIDKEICPKLVEYRNWS) is hypervariable stalk region. N-linked (GlcNAc...) asparagine; by host glycans are attached at residues asparagine 61, asparagine 70, and asparagine 86. The tract at residues 91–469 (QCKITGFAPF…DGADINLMPI (379 aa)) is head of neuraminidase. 8 disulfide bridges follow: cysteine 92–cysteine 417, cysteine 124–cysteine 129, cysteine 183–cysteine 230, cysteine 232–cysteine 237, cysteine 278–cysteine 291, cysteine 280–cysteine 289, cysteine 318–cysteine 337, and cysteine 421–cysteine 447. Residue arginine 118 participates in substrate binding. An N-linked (GlcNAc...) asparagine; by host glycan is attached at asparagine 146. Aspartate 151 functions as the Proton donor/acceptor in the catalytic mechanism. Residue arginine 152 participates in substrate binding. 2 N-linked (GlcNAc...) asparagine; by host glycosylation sites follow: asparagine 200 and asparagine 234. Residue 276 to 277 (EE) participates in substrate binding. Arginine 292 lines the substrate pocket. Ca(2+) contacts are provided by aspartate 293, glycine 297, and aspartate 324. Position 371 (arginine 371) interacts with substrate. Residue asparagine 402 is glycosylated (N-linked (GlcNAc...) asparagine; by host). Tyrosine 406 functions as the Nucleophile in the catalytic mechanism.

This sequence belongs to the glycosyl hydrolase 34 family. In terms of assembly, homotetramer. Ca(2+) serves as cofactor. Post-translationally, N-glycosylated.

Its subcellular location is the virion membrane. The protein localises to the host apical cell membrane. It carries out the reaction Hydrolysis of alpha-(2-&gt;3)-, alpha-(2-&gt;6)-, alpha-(2-&gt;8)- glycosidic linkages of terminal sialic acid residues in oligosaccharides, glycoproteins, glycolipids, colominic acid and synthetic substrates.. Its activity is regulated as follows. Inhibited by the neuraminidase inhibitors zanamivir (Relenza) and oseltamivir (Tamiflu). These drugs interfere with the release of progeny virus from infected cells and are effective against all influenza strains. Resistance to neuraminidase inhibitors is quite rare. Its function is as follows. Catalyzes the removal of terminal sialic acid residues from viral and cellular glycoconjugates. Cleaves off the terminal sialic acids on the glycosylated HA during virus budding to facilitate virus release. Additionally helps virus spread through the circulation by further removing sialic acids from the cell surface. These cleavages prevent self-aggregation and ensure the efficient spread of the progeny virus from cell to cell. Otherwise, infection would be limited to one round of replication. Described as a receptor-destroying enzyme because it cleaves a terminal sialic acid from the cellular receptors. May facilitate viral invasion of the upper airways by cleaving the sialic acid moieties on the mucin of the airway epithelial cells. Likely to plays a role in the budding process through its association with lipid rafts during intracellular transport. May additionally display a raft-association independent effect on budding. Plays a role in the determination of host range restriction on replication and virulence. Sialidase activity in late endosome/lysosome traffic seems to enhance virus replication. This chain is Neuraminidase, found in Aves (whales).